The chain runs to 353 residues: MGNEEAFTFALAMATGSFANMVLRAVVELDVFEIMKRAGPGTHLSAAEIAAHLPTKNPDANAMLDRMLRVLAGYEVLSCSNRSLPNGQVERLYGLSPVSQFFTKSEDGASLAPLCLLNQDKVYWESWYHLKDAVLDGGIAFNRAHNLTLYEYAGIDDRFNKVFNDGMSGCSTTIMKKMVENYKGFEGVSTLVDVAGGIGKNLNMIISKYPTIKGINFDLPHVIKDAPRCRGVENIGGDMFISVPQGDAIFIKWICCDWNDEHCLKFLKNCYAALPDHGKVILYEFIFPKASETSYAARVILNIDAVTLATVVGGRIRTEAEFEALAKGAGFEGFKMAYSTSEVDAVMEFLKKK.

S-adenosyl-L-homocysteine-binding residues include serine 171, alanine 195, aspartate 218, aspartate 238, and lysine 252. Aspartate 218 contacts S-adenosyl-L-methionine.

It belongs to the class I-like SAM-binding methyltransferase superfamily. Cation-independent O-methyltransferase family. Homodimer. Expressed at high levels in all tissues.

It catalyses the reaction 3-methoxytyramine + S-adenosyl-L-methionine = N-methyl-3-methoxytyramine + S-adenosyl-L-homocysteine + H(+). It carries out the reaction mescaline + S-adenosyl-L-methionine = N-methylmescaline + S-adenosyl-L-homocysteine + H(+). The enzyme catalyses tyramine + S-adenosyl-L-methionine = N-methyltyramine + S-adenosyl-L-homocysteine + H(+). The catalysed reaction is 4-hydroxy-3,5-dimethoxyphenethylamine + S-adenosyl-L-methionine = N-methyl-4-hydroxy-3,5-dimethoxyphenethylamine + S-adenosyl-L-homocysteine + H(+). It participates in aromatic compound metabolism. Its pathway is alkaloid biosynthesis. N-methyltransferase participating in the biosynthesis of natural products derived from phenylethylamine, including mescaline, a natural hallucinogen potentially used in psychotherapeutic treatments. Catalyzes the N-methylation of many substrates, including 3-methoxytyramine, 5-hydroxy-3,4-dimethoxyphenethylamine, 4-hydroxy-3,5-dimethoxyphenethylamine, tyramine and mescaline. The protein is N-methyltransferase of Lophophora williamsii (Peyote).